The primary structure comprises 881 residues: Alanine--tRNA ligase (881 aa).

His563, His567, Cys672, and His676 together coordinate Zn(2+).

The protein belongs to the class-II aminoacyl-tRNA synthetase family. Zn(2+) is required as a cofactor.

The protein localises to the cytoplasm. The enzyme catalyses tRNA(Ala) + L-alanine + ATP = L-alanyl-tRNA(Ala) + AMP + diphosphate. Catalyzes the attachment of alanine to tRNA(Ala) in a two-step reaction: alanine is first activated by ATP to form Ala-AMP and then transferred to the acceptor end of tRNA(Ala). Also edits incorrectly charged Ser-tRNA(Ala) and Gly-tRNA(Ala) via its editing domain. The polypeptide is Alanine--tRNA ligase (Azorhizobium caulinodans (strain ATCC 43989 / DSM 5975 / JCM 20966 / LMG 6465 / NBRC 14845 / NCIMB 13405 / ORS 571)).